The following is a 30-amino-acid chain: Protein Tat (30 aa).

Positions 1 to 30 (PLPTTRGNPTGPKESKKEVESKTETDPFAW) are disordered. Positions 6 to 8 (RGN) match the Cell attachment site motif. Residues 13–30 (KESKKEVESKTETDPFAW) show a composition bias toward basic and acidic residues.

This sequence belongs to the lentiviruses Tat family. As to quaternary structure, interacts with host CCNT1. Associates with the P-TEFb complex composed at least of Tat, P-TEFb (CDK9 and CCNT1), TAR RNA, RNA Pol II. Recruits the HATs CREBBP, TAF1/TFIID, EP300, PCAF and GCN5L2. Interacts with host KAT5/Tip60; this interaction targets the latter to degradation. Interacts with the host deacetylase SIRT1. Interacts with host capping enzyme RNGTT; this interaction stimulates RNGTT. Binds to host KDR, and to the host integrins ITGAV/ITGB3 and ITGA5/ITGB1. Interacts with host KPNB1/importin beta-1 without previous binding to KPNA1/importin alpha-1. Interacts with EIF2AK2. Interacts with host nucleosome assembly protein NAP1L1; this interaction may be required for the transport of Tat within the nucleus, since the two proteins interact at the nuclear rim. Interacts with host C1QBP/SF2P32; this interaction involves lysine-acetylated Tat. Interacts with the host chemokine receptors CCR2, CCR3 and CXCR4. Interacts with host DPP4/CD26; this interaction may trigger an anti-proliferative effect. Interacts with host LDLR. Interacts with the host extracellular matrix metalloproteinase MMP1. Interacts with host PRMT6; this interaction mediates Tat's methylation. Interacts with, and is ubiquitinated by MDM2/Hdm2. Interacts with host PSMC3 and HTATIP2. Interacts with STAB1; this interaction may overcome SATB1-mediated repression of IL2 and IL2RA (interleukin) in T cells by binding to the same domain than HDAC1. Interacts (when acetylated on Lys-50 and Lys-51) with human CDK13, thereby increasing HIV-1 mRNA splicing and promoting the production of the doubly spliced HIV-1 protein Nef. Acetylation by EP300, CREBBP, GCN5L2/GCN5 and PCAF regulates the transactivation activity of Tat. EP300-mediated acetylation of Lys-50 promotes dissociation of Tat from the TAR RNA through the competitive binding to PCAF's bromodomain. In addition, the non-acetylated Tat's N-terminus can also interact with PCAF. PCAF-mediated acetylation of Lys-28 enhances Tat's binding to CCNT1. Lys-50 is deacetylated by SIRT1. Post-translationally, phosphorylated by EIF2AK2 on serine and threonine residues adjacent to the basic region important for TAR RNA binding and function. Phosphorylation of Tat by EIF2AK2 is dependent on the prior activation of EIF2AK2 by dsRNA. In terms of processing, asymmetrical arginine methylation by host PRMT6 seems to diminish the transactivation capacity of Tat and affects the interaction with host CCNT1. Polyubiquitination by MDM2 does not target Tat to degradation, but activates its transactivation function and fosters interaction with CCNT1 and TAR RNA.

It is found in the host nucleus. The protein localises to the host nucleolus. It localises to the host cytoplasm. The protein resides in the secreted. Transcriptional activator that increases RNA Pol II processivity, thereby increasing the level of full-length viral transcripts. Recognizes a hairpin structure at the 5'-LTR of the nascent viral mRNAs referred to as the transactivation responsive RNA element (TAR) and recruits the cyclin T1-CDK9 complex (P-TEFb complex) that will in turn hyperphosphorylate the RNA polymerase II to allow efficient elongation. The CDK9 component of P-TEFb and other Tat-activated kinases hyperphosphorylate the C-terminus of RNA Pol II that becomes stabilized and much more processive. Other factors such as HTATSF1/Tat-SF1, SUPT5H/SPT5, and HTATIP2 are also important for Tat's function. Besides its effect on RNA Pol II processivity, Tat induces chromatin remodeling of proviral genes by recruiting the histone acetyltransferases (HATs) CREBBP, EP300 and PCAF to the chromatin. This also contributes to the increase in proviral transcription rate, especially when the provirus integrates in transcriptionally silent region of the host genome. To ensure maximal activation of the LTR, Tat mediates nuclear translocation of NF-kappa-B by interacting with host RELA. Through its interaction with host TBP, Tat may also modulate transcription initiation. Tat can reactivate a latently infected cell by penetrating in it and transactivating its LTR promoter. In the cytoplasm, Tat is thought to act as a translational activator of HIV-1 mRNAs. In terms of biological role, extracellular circulating Tat can be endocytosed by surrounding uninfected cells via the binding to several surface receptors such as CD26, CXCR4, heparan sulfate proteoglycans (HSPG) or LDLR. Neurons are rarely infected, but they internalize Tat via their LDLR. Endosomal low pH allows Tat to cross the endosome membrane to enter the cytosol and eventually further translocate into the nucleus, thereby inducing severe cell dysfunctions ranging from cell activation to cell death. Through its interaction with nuclear HATs, Tat is potentially able to control the acetylation-dependent cellular gene expression. Tat seems to inhibit the HAT activity of KAT5/Tip60 and TAF1, and consequently modify the expression of specific cellular genes. Modulates the expression of many cellular genes involved in cell survival, proliferation or in coding for cytokines (such as IL10) or cytokine receptors. May be involved in the derepression of host interleukin IL2 expression. Mediates the activation of cyclin-dependent kinases and dysregulation of microtubule network. Tat plays a role in T-cell and neurons apoptosis. Tat induced neurotoxicity and apoptosis probably contribute to neuroAIDS. Host extracellular matrix metalloproteinase MMP1 cleaves Tat and decreases Tat's mediated neurotoxicity. Circulating Tat also acts as a chemokine-like and/or growth factor-like molecule that binds to specific receptors on the surface of the cells, affecting many cellular pathways. In the vascular system, Tat binds to ITGAV/ITGB3 and ITGA5/ITGB1 integrins dimers at the surface of endothelial cells and competes with bFGF for heparin-binding sites, leading to an excess of soluble bFGF. Binds to KDR/VEGFR-2. All these Tat-mediated effects enhance angiogenesis in Kaposi's sarcoma lesions. This Human immunodeficiency virus type 1 group M subtype A (isolate Z321) (HIV-1) protein is Protein Tat.